Here is a 302-residue protein sequence, read N- to C-terminus: Acetyl-coenzyme A carboxylase carboxyl transferase subunit beta (302 aa).

One can recognise a CoA carboxyltransferase N-terminal domain in the interval 25 to 294 (VWTKCDSCGQ…PQEDIVTEAA (270 aa)). Zn(2+) contacts are provided by C29, C32, C48, and C51. The segment at 29–51 (CDSCGQVLYRAELERNLEVCPKC) adopts a C4-type zinc-finger fold.

It belongs to the AccD/PCCB family. Acetyl-CoA carboxylase is a heterohexamer composed of biotin carboxyl carrier protein (AccB), biotin carboxylase (AccC) and two subunits each of ACCase subunit alpha (AccA) and ACCase subunit beta (AccD). Requires Zn(2+) as cofactor.

Its subcellular location is the cytoplasm. The catalysed reaction is N(6)-carboxybiotinyl-L-lysyl-[protein] + acetyl-CoA = N(6)-biotinyl-L-lysyl-[protein] + malonyl-CoA. It participates in lipid metabolism; malonyl-CoA biosynthesis; malonyl-CoA from acetyl-CoA: step 1/1. Functionally, component of the acetyl coenzyme A carboxylase (ACC) complex. Biotin carboxylase (BC) catalyzes the carboxylation of biotin on its carrier protein (BCCP) and then the CO(2) group is transferred by the transcarboxylase to acetyl-CoA to form malonyl-CoA. The chain is Acetyl-coenzyme A carboxylase carboxyl transferase subunit beta from Erwinia tasmaniensis (strain DSM 17950 / CFBP 7177 / CIP 109463 / NCPPB 4357 / Et1/99).